The primary structure comprises 630 residues: CREB-regulated transcription coactivator 1 (630 aa).

Phosphoserine is present on residues serine 64 and serine 113. 4 disordered regions span residues 142–174, 187–221, 256–331, and 356–475; these read ADTSWRRTNSDSALHQSTMTPTQAESFTGGPQD, GMEETGSETDKTLSKQSWDSKKAGSRPKSCEVPGI, SPLP…LSPL, and QAGS…HTST. The residue at position 149 (threonine 149) is a Phosphothreonine. Serine 151 is modified (phosphoserine; by SIK1 and SIK2). The segment covering 151 to 167 has biased composition (polar residues); that stretch reads SDSALHQSTMTPTQAES. Phosphothreonine is present on threonine 161. Residues 194-208 show a composition bias toward basic and acidic residues; sequence ETDKTLSKQSWDSKK. Residues 242–258 carry the Nuclear export signal motif; it reads TGGSLPDLSTIHFPSPL. Over residues 256–270 the composition is skewed to pro residues; the sequence is SPLPTPLDPEEPPFP. Composition is skewed to polar residues over residues 292 to 301 and 310 to 331; these read GMNTPSSSPQ and LSLSTEARRQQAQQVPPTLSPL. Over residues 361-384 the composition is skewed to pro residues; it reads QPPPQPQPPPPPPPVSQQQPPPPQ. The span at 385–394 shows a compositional bias: low complexity; it reads VSVGLPQGGP. Composition is skewed to polar residues over residues 414–426 and 450–475; these read VPSTLPQSPTESP and PATQSPTSPVSNQGFSPGSSPQHTST.

The protein belongs to the TORC family. As to quaternary structure, binds, as a tetramer, through its N-terminal region, with the bZIP domain of CREB1. 'Arg-314' in the bZIP domain of CREB1 is essential for this interaction. Interaction, via its C-terminal, with TAF4, enhances recruitment of TAF4 to CREB1. Interacts with 14-3-3 proteins, including YWHAE/14-3-3 epsilon. Interacts with calmodulin-dependent catalytic subunit PPP3CA/calcineurin A. Post-translationally, phosphorylation/dephosphorylation states of Ser-151 are required for regulating transduction of CREB activity. TORCs are inactive when phosphorylated, and active when dephosphorylated at this site. This primary site of phosphorylation is mediated by SIKs (SIK1 and SIK2), is regulated by cAMP and calcium levels and is dependent on the phosphorylation of SIKs by LKB1. As to expression, highly expressed in developing cortical neurons, peaking during dendrite development.

It localises to the cytoplasm. Its subcellular location is the nucleus. Transcriptional coactivator for CREB1 which activates transcription through both consensus and variant cAMP response element (CRE) sites. Acts as a coactivator, in the SIK/TORC signaling pathway, being active when dephosphorylated and acts independently of CREB1 'Ser-133' phosphorylation. Enhances the interaction of CREB1 with TAF4. Regulates the expression of specific CREB-activated genes such as the steroidogenic gene, StAR. Potent coactivator of PGC1alpha and inducer of mitochondrial biogenesis in muscle cells. In the hippocampus, involved in late-phase long-term potentiation (L-LTP) maintenance at the Schaffer collateral-CA1 synapses. May be required for dendritic growth of developing cortical neurons. In concert with SIK1, regulates the light-induced entrainment of the circadian clock. In response to light stimulus, coactivates the CREB-mediated transcription of PER1 which plays an important role in the photic entrainment of the circadian clock. The protein is CREB-regulated transcription coactivator 1 (Crtc1) of Rattus norvegicus (Rat).